We begin with the raw amino-acid sequence, 441 residues long: MMKPQHGGMAGHGGGRTRSPFLTSYALTLAFITFVSVLYFKDFSSTLHQPFLTRPPPHRRQIARPRAPSHHHGGGSSSGGGDVVPPFAVGAAAAAGCDVGVGEWVYDEAARPWYEEEECPYIQPQLTCQAHGRPDTAYQHWRWQPRGCSLPSFNATLMLEMLRGKRMMFVGDSLNRGQYVSLVCLLHRSIPESSKSMETFDSLTVFRAKNYNATIEFYWAPFLAESNSDDAVVHRIADRIVRGTALEKHARFWKGADILVFNSYLWWMTGQKMKILQGSFEDKSKDIVEMETEEAYGMVLNAVVRWVENNMNPRNSRVFFVTMSPTHTRSKDWGDDSDGNCYNQTTPIRDLSYWGPGTSKGLMRVIGEVFSTSKVPVGIVNITQLSEYRKDAHTQIYKKQWNPLTPEQIANPKSYADCTHWCLPGLQDTWNELLYSKLFFP.

The Cytoplasmic segment spans residues 1 to 19; the sequence is MMKPQHGGMAGHGGGRTRS. The helical; Signal-anchor for type II membrane protein transmembrane segment at 20 to 40 threads the bilayer; that stretch reads PFLTSYALTLAFITFVSVLYF. Topologically, residues 41 to 441 are lumenal; that stretch reads KDFSSTLHQP…ELLYSKLFFP (401 aa). The tract at residues 50–81 is disordered; the sequence is PFLTRPPPHRRQIARPRAPSHHHGGGSSSGGG. The span at 56 to 73 shows a compositional bias: basic residues; sequence PPHRRQIARPRAPSHHHG. Disulfide bonds link cysteine 97–cysteine 148, cysteine 119–cysteine 184, cysteine 128–cysteine 422, and cysteine 341–cysteine 418. N-linked (GlcNAc...) asparagine glycosylation is present at asparagine 154. The GDS motif signature appears at 171–173; that stretch reads GDS. The active-site Nucleophile is the serine 173. Asparagine 212, asparagine 343, and asparagine 381 each carry an N-linked (GlcNAc...) asparagine glycan. Catalysis depends on aspartate 417, which acts as the Proton donor. The DXXH motif signature appears at 417 to 420; it reads DCTH. Histidine 420 acts as the Proton acceptor in catalysis.

This sequence belongs to the PC-esterase family. TBL subfamily. In terms of tissue distribution, expressed in roots, leaves and stems.

The protein resides in the golgi apparatus membrane. In terms of biological role, probable xylan acetyltransferase required for 2-O- and 3-O-monoacetylation of xylosyl residues in xylan. Possesses extremely low activity in vitro. In Oryza sativa subsp. japonica (Rice), this protein is Probable xylan O-acetyltransferase 10.